Reading from the N-terminus, the 70-residue chain is Sec-independent protein translocase protein TatA (70 aa).

A helical membrane pass occupies residues Met-1–Gly-21. The tract at residues Lys-45 to Gly-70 is disordered.

It belongs to the TatA/E family. In terms of assembly, the Tat system comprises two distinct complexes: a TatABC complex, containing multiple copies of TatA, TatB and TatC subunits, and a separate TatA complex, containing only TatA subunits. Substrates initially bind to the TatABC complex, which probably triggers association of the separate TatA complex to form the active translocon.

The protein resides in the cell inner membrane. Part of the twin-arginine translocation (Tat) system that transports large folded proteins containing a characteristic twin-arginine motif in their signal peptide across membranes. TatA could form the protein-conducting channel of the Tat system. This Phenylobacterium zucineum (strain HLK1) protein is Sec-independent protein translocase protein TatA.